The primary structure comprises 275 residues: 2,3,4,5-tetrahydropyridine-2,6-dicarboxylate N-succinyltransferase (275 aa).

The substrate site is built by Arg106 and Asp143.

This sequence belongs to the transferase hexapeptide repeat family. As to quaternary structure, homotrimer.

It localises to the cytoplasm. The enzyme catalyses (S)-2,3,4,5-tetrahydrodipicolinate + succinyl-CoA + H2O = (S)-2-succinylamino-6-oxoheptanedioate + CoA. It functions in the pathway amino-acid biosynthesis; L-lysine biosynthesis via DAP pathway; LL-2,6-diaminopimelate from (S)-tetrahydrodipicolinate (succinylase route): step 1/3. This Ralstonia nicotianae (strain ATCC BAA-1114 / GMI1000) (Ralstonia solanacearum) protein is 2,3,4,5-tetrahydropyridine-2,6-dicarboxylate N-succinyltransferase.